Here is a 130-residue protein sequence, read N- to C-terminus: Chaperone protein SycT (130 aa).

Binds to YopT.

Its function is as follows. Functions as a specific chaperone for YopT. The chain is Chaperone protein SycT (sycT) from Yersinia enterocolitica serotype O:8 / biotype 1B (strain NCTC 13174 / 8081).